The chain runs to 408 residues: Eukaryotic initiation factor 4A-II (408 aa).

The interval Met-1–Asp-22 is disordered. Positions Asp-34–Gln-62 match the Q motif motif. Residues Ile-65–Ile-236 form the Helicase ATP-binding domain. Position 77–84 (Gln-77–Lys-84) interacts with ATP. Thr-160 is modified (phosphothreonine). A DEAD box motif is present at residues Leu-183–Ala-186. The 162-residue stretch at Gly-247 to Ile-408 folds into the Helicase C-terminal domain.

The protein belongs to the DEAD box helicase family. eIF4A subfamily. As to quaternary structure, eIF4F is a multi-subunit complex, the composition of which varies with external and internal environmental conditions. It is composed of at least EIF4A, EIF4E and EIF4G1/EIFFG3. Interacts with EIF4E. May interact with NOM1.

The enzyme catalyses ATP + H2O = ADP + phosphate + H(+). ATP-dependent RNA helicase which is a subunit of the eIF4F complex involved in cap recognition and is required for mRNA binding to ribosome. In the current model of translation initiation, eIF4A unwinds RNA secondary structures in the 5'-UTR of mRNAs which is necessary to allow efficient binding of the small ribosomal subunit, and subsequent scanning for the initiator codon. This Macaca fascicularis (Crab-eating macaque) protein is Eukaryotic initiation factor 4A-II (EIF4A2).